An 80-amino-acid chain; its full sequence is Small pacifastin protease inhibitor (80 aa).

The signal sequence occupies residues 1 to 24 (MSKVLKVGLLLLLVAVAASAYAVA). A propeptide spanning residues 25–47 (EENGAPKENKQLPQIDDYGVTNK) is cleaved from the precursor. The Pacifastin domain occupies 45–80 (TNKCPANQPFKWNCNYCTCGPEGKDASCTRMACPQH). Intrachain disulfides connect Cys-48–Cys-63, Cys-58–Cys-77, and Cys-61–Cys-72.

The protein belongs to the protease inhibitor I19 family. In terms of tissue distribution, expressed in the venom apparatus. Low transcript levels are also detected in other tissues.

The protein localises to the secreted. In terms of biological role, parasitic wasp protein that may interfere with the host immune response. The recombinant protein inhibits trypsin activity and prophenoloxidase (PPO) activation, an enzyme essential for both clotting and insect innate immune responses. It does not inhibit activity of chymotrypsin and protease K, and has no effect on phenoloxidase (PO) activity. This Nasonia vitripennis (Parasitic wasp) protein is Small pacifastin protease inhibitor.